The sequence spans 194 residues: MPQTEQIHQHSVLRDIIRSRRSIRKFKQEPVPSAVILDMLETAKYAPNHRVTEPWRFIYVSSETGKANLINTFAAFSKKSKPDMTEEKLQNFKNTLGRVPGFLLVVFQEDENERARDDDFAATSSLIQNLQLLAWEKGIGMVWKSGKILYDKEVHQAFGLQDNERFAAIIQTGYPDEAPEVKKRTPIRDRFTEM.

FMN contacts are provided by residues 20–22 (RRS), 147–148 (KI), and Arg-188.

Belongs to the nitroreductase family. It depends on FMN as a cofactor.

This Bacillus subtilis (strain 168) protein is Putative NAD(P)H nitroreductase YfhC (yfhC).